The chain runs to 548 residues: Fumarate hydratase class I, anaerobic (548 aa).

Residue cysteine 105 participates in [4Fe-4S] cluster binding. An N6-acetyllysine modification is found at lysine 192. [4Fe-4S] cluster-binding residues include cysteine 224 and cysteine 318.

This sequence belongs to the class-I fumarase family. As to quaternary structure, homodimer. [4Fe-4S] cluster is required as a cofactor.

It catalyses the reaction (S)-malate = fumarate + H2O. It carries out the reaction (S,S)-tartrate = oxaloacetate + H2O. Its function is as follows. Catalyzes the reversible hydration of fumarate to (S)-malate. Functions in the generation of fumarate for use as an anaerobic electron acceptor. To a lesser extent, also displays D-tartrate dehydratase activity, but is not able to convert (R)-malate, L-tartrate or meso-tartrate. Is required for anaerobic growth on D-tartrate. This Escherichia coli (strain K12) protein is Fumarate hydratase class I, anaerobic.